Consider the following 562-residue polypeptide: MENQKVPISSVPNLKDLDMISRPIANFPPSVWGDRFINYACEDENEQAQKERQVEELKEQVRRELAAAIDKPLQQLNIIDATQRLGIAYHFENEIEESLKHIYLHTYVENTCFEGSDDLCSVALWFRLLRQDGYRVSCDVFKKFRDSEGNFKNSLMEDAKGLLELYEATHLSVNGEEMLDDALEFTKTHLELVVSHLNYPLAEQVRHALYQPQHKGLPRLEAVYFFRIYEAYDSHNEALLKLAKLDFNLLQSLHMKELSHMAKWWKSLDFATKFPFARDRLVEGYFWILGVYFEPQYSLARKIIIKVFTMISTIDDIYDAYGTLDELKLFTKAIQRWDIGSLDQLPEYMKPCYKSVLDVYNEIEEEMDNQGSLFRMHYAKEEMKKIVEGYMDEAKWCHEKYVPTFQEYMSVALVTAGYTFLTTISYLGMGEIASKEAFDWLFSHPPIIEASESVGRLMDDMRSHEFEQERGHVASGIECYMKQYGVTEEEAHDKFHKRLVKAWKDINEGCLRPYPVPKPLLMRILSLTRVIDVIYKNEDWYTHVKKPMKDKIASLLIDPMIV.

Residues aspartate 315, aspartate 319, and glutamate 467 each contribute to the Mg(2+) site. Positions 315–319 (DDIYD) match the DDXXD motif motif.

The protein belongs to the terpene synthase family. Tpsa subfamily. Mg(2+) is required as a cofactor. Requires Mn(2+) as cofactor.

Its function is as follows. Catalyzes the formation of beta-elemol, guaiol and bulnesol. The polypeptide is Sesquiterpene synthase (Santalum spicatum (Australian sandalwood)).